The sequence spans 263 residues: Ribosomal RNA small subunit methyltransferase A (263 aa).

6 residues coordinate S-adenosyl-L-methionine: Asn-20, Leu-22, Gly-47, Glu-68, Asp-90, and Asn-110.

It belongs to the class I-like SAM-binding methyltransferase superfamily. rRNA adenine N(6)-methyltransferase family. RsmA subfamily.

It is found in the cytoplasm. The catalysed reaction is adenosine(1518)/adenosine(1519) in 16S rRNA + 4 S-adenosyl-L-methionine = N(6)-dimethyladenosine(1518)/N(6)-dimethyladenosine(1519) in 16S rRNA + 4 S-adenosyl-L-homocysteine + 4 H(+). In terms of biological role, specifically dimethylates two adjacent adenosines (A1518 and A1519) in the loop of a conserved hairpin near the 3'-end of 16S rRNA in the 30S particle. May play a critical role in biogenesis of 30S subunits. This Chlorobium limicola (strain DSM 245 / NBRC 103803 / 6330) protein is Ribosomal RNA small subunit methyltransferase A.